Reading from the N-terminus, the 207-residue chain is Urease accessory protein UreG (207 aa).

Position 14-21 (14-21 (GPVGSGKT)) interacts with GTP.

The protein belongs to the SIMIBI class G3E GTPase family. UreG subfamily. As to quaternary structure, homodimer. UreD, UreF and UreG form a complex that acts as a GTP-hydrolysis-dependent molecular chaperone, activating the urease apoprotein by helping to assemble the nickel containing metallocenter of UreC. The UreE protein probably delivers the nickel.

The protein resides in the cytoplasm. Functionally, facilitates the functional incorporation of the urease nickel metallocenter. This process requires GTP hydrolysis, probably effectuated by UreG. This chain is Urease accessory protein UreG, found in Tolumonas auensis (strain DSM 9187 / NBRC 110442 / TA 4).